The chain runs to 294 residues: MQNFMVLLLLIVAVVAIMFVLPKNNKTLLHHMRRRRRELKDLLKSKKIIGAKNLMEFVKKYTQIDKTCAYEGPIPMPAEFSTMSADNLQLLDKCGAVRSSLNSWAIATWAENSVVKTMENLQSTMECVNQLNLVPDTYNRFQELVTACFSAVPPPPPKNPNNISNLPIGVYGSPYGIYGMNYNLGTSYQGVTNGFVSDSRGWRPDDYFNYNAQGSELIDGTNTLMTAQMLQQYELPRIGFGPYMSRSEIDAEVLPKYEPSQWIVNNGPVRPWEPKYPIMTIPPTPIPLLGTSNM.

An N-terminal signal peptide occupies residues methionine 1–alanine 16. N-linked (GlcNAc...) asparagine; by host glycosylation is found at asparagine 25 and asparagine 162.

This is an uncharacterized protein from Acheta domesticus (House cricket).